The following is a 122-amino-acid chain: Large ribosomal subunit protein uL14 (122 aa).

The protein belongs to the universal ribosomal protein uL14 family. Part of the 50S ribosomal subunit. Forms a cluster with proteins L3 and L19. In the 70S ribosome, L14 and L19 interact and together make contacts with the 16S rRNA in bridges B5 and B8.

In terms of biological role, binds to 23S rRNA. Forms part of two intersubunit bridges in the 70S ribosome. The protein is Large ribosomal subunit protein uL14 of Microcystis aeruginosa (strain NIES-843 / IAM M-2473).